Reading from the N-terminus, the 184-residue chain is Holliday junction branch migration complex subunit RuvA (184 aa).

The segment at 1 to 62 (MIVGLVGEVL…EDSESLYGFV (62 aa)) is domain I. The interval 63–134 (DINEKKMFDR…ELGEFDISES (72 aa)) is domain II. Residues 134-135 (SN) are flexible linker. A domain III region spans residues 136 to 184 (VTSSAFQEASMALQSLGFKKEQIQKALQECTATDTASLVKEALKKIQKL).

The protein belongs to the RuvA family. Homotetramer. Forms an RuvA(8)-RuvB(12)-Holliday junction (HJ) complex. HJ DNA is sandwiched between 2 RuvA tetramers; dsDNA enters through RuvA and exits via RuvB. An RuvB hexamer assembles on each DNA strand where it exits the tetramer. Each RuvB hexamer is contacted by two RuvA subunits (via domain III) on 2 adjacent RuvB subunits; this complex drives branch migration. In the full resolvosome a probable DNA-RuvA(4)-RuvB(12)-RuvC(2) complex forms which resolves the HJ.

It localises to the cytoplasm. Functionally, the RuvA-RuvB-RuvC complex processes Holliday junction (HJ) DNA during genetic recombination and DNA repair, while the RuvA-RuvB complex plays an important role in the rescue of blocked DNA replication forks via replication fork reversal (RFR). RuvA specifically binds to HJ cruciform DNA, conferring on it an open structure. The RuvB hexamer acts as an ATP-dependent pump, pulling dsDNA into and through the RuvAB complex. HJ branch migration allows RuvC to scan DNA until it finds its consensus sequence, where it cleaves and resolves the cruciform DNA. The chain is Holliday junction branch migration complex subunit RuvA from Nitratiruptor sp. (strain SB155-2).